The primary structure comprises 309 residues: Dioxygenase af480 (309 aa).

Positions 153, 155, and 228 each coordinate Fe cation.

This sequence belongs to the PhyH family. It depends on Fe cation as a cofactor.

The catalysed reaction is 5-dehydro-6-demethoxyfumagillol + 2-oxoglutarate + O2 = 5-dehydro-6-demethoxy-6-hydroxyfumagillol + succinate + CO2. It participates in secondary metabolite biosynthesis; terpenoid biosynthesis. Its function is as follows. Dioxygenase; part of the gene cluster that mediates the biosynthesis of fumagillin, a meroterpenoid that has numerous biological activities including irreversible inhibition of human type 2 methionine aminopeptidase (METAP2). Within the pathway, the dioxygenase af480 acts as a 5-dehydro-6-demethoxyfumagillol dioxygenase that hydroylates 5-keto-demethoxyfumagillol at position C-6. The pathway begins with the conversion of farnesyl pyrophosphate (FPP) to beta-trans-bergamotene by the membrane-bound beta-trans-bergamotene synthase af520. The multifunctional cytochrome P450 monooxygenase af510 then converts beta-trans-bergamotene into 5-keto-demethoxyfumagillol via several oxydation steps. 5-keto-demethoxyfumagillol is then subjected to successive C-6 hydroxylation and O-methylation by the dioxygenase af480 and O-methyltransferase af390-400, respectively, to yield 5-keto-fumagillol, which is then stereoselectively reduced by the keto-reductase af490 to 5R-hydroxy-seco-sesquiterpene. The next step is the polyketide transferase af380-catalyzed transfer of a dodecapentaenoyl group synthesized by the polyketide synthase af370 onto 5R-hydroxy-seco-sesquiterpene which leads to the production of prefumagillin. Finally, oxidative cleavage by the monooxygenase af470 converts prefumagillin to fumagillin. The sequence is that of Dioxygenase af480 from Aspergillus fumigatus (strain ATCC MYA-4609 / CBS 101355 / FGSC A1100 / Af293) (Neosartorya fumigata).